The primary structure comprises 1481 residues: Cystic fibrosis transmembrane conductance regulator (1481 aa).

The Cytoplasmic segment spans residues 1–77 (MQRSPLEKAS…KLINALRRCF (77 aa)). Residues 78–98 (FWRFMFYGILLYLGEVTKAVQ) form a helical membrane-spanning segment. In terms of domain architecture, ABC transmembrane type-1 1 spans 81 to 365 (FMFYGILLYL…WAVQTWYDSL (285 aa)). The Extracellular segment spans residues 99-122 (PLLLGRIIASYDPDNKEERSIAIY). A helical transmembrane segment spans residues 123 to 146 (LGIGLCLLFIVRTLLLHPAIFGLH). Over 147-195 (HIGMQMRIAMFSLIYKKTLKLSSRVLDKISIGQLVSLLSNNLNKFDEGL) the chain is Cytoplasmic. The helical transmembrane segment at 196–216 (ALAHFVWIVPLQVALLMGLIW) threads the bilayer. The Extracellular segment spans residues 217-222 (ELLQAS). A helical membrane pass occupies residues 223-243 (AFCGLGFLIVLALFQAGLGRM). At 244–298 (MMKYRDQRAGKINERLVITSEMIENIQSVKAYCWEEAMEKMIENLRQTELKLTRK) the chain is on the cytoplasmic side. Residues 299–319 (AAYVRYFNSSAFFFSGFFVVF) traverse the membrane as a helical segment. The Extracellular segment spans residues 320-339 (LSVLPYALIKGIVLRKIFTT). A helical membrane pass occupies residues 340-358 (ISFCIVLRMAVTRQFPWAV). The Cytoplasmic portion of the chain corresponds to 359-858 (QTWYDSLGAI…YLRYITVHKS (500 aa)). Residues Trp401, Ser434, 458–465 (GSTGAGKT), and Gln493 each bind ATP. One can recognise an ABC transporter 1 domain in the interval 423–646 (NDDDSLFFSN…RPDFSSKLMG (224 aa)). Cys524 carries the S-palmitoyl cysteine lipid modification. Phosphoserine occurs at positions 549 and 660. The segment at 654–831 (SAERRNSILT…EEINEEDLKE (178 aa)) is disordered R region. The residue at position 670 (Ser670) is a Phosphoserine; by PKA. Ser686 bears the Phosphoserine mark. Lys688 is covalently cross-linked (Glycyl lysine isopeptide (Lys-Gly) (interchain with G-Cter in ubiquitin)). 2 positions are modified to phosphoserine: Ser700 and Ser712. The residue at position 717 (Thr717) is a Phosphothreonine. A phosphoserine mark is found at Ser737, Ser753, Ser768, Ser790, Ser795, and Ser813. A helical membrane pass occupies residues 859 to 879 (LIFVLIWCLVIFLAEVAASLV). Positions 859–1155 (LIFVLIWCLV…AVNSSIDVDS (297 aa)) constitute an ABC transmembrane type-1 2 domain. Topologically, residues 880–918 (VLWFLGNTPPQDKGNSTYSRNNSYAVIITRTSSYYVFYI) are extracellular. 2 N-linked (GlcNAc...) asparagine glycosylation sites follow: Asn894 and Asn900. A discontinuously helical transmembrane segment spans residues 919–939 (YVGVADTLLAMGFFRGLPLVH). The Cytoplasmic segment spans residues 940–990 (TLITVSKILHHKMLHSVLQAPMSTLNTLKAGGILNRFSKDIAILDDLLPLT). Residues 991–1011 (IFDFIQLLLIVIGAIAVVAVL) form a helical membrane-spanning segment. Over 1012–1013 (QP) the chain is Extracellular. A helical transmembrane segment spans residues 1014 to 1034 (YIFVATVPVIVAFIMLRAYFL). Residues 1035-1095 (QTSQQLKQLE…TANWFLYLST (61 aa)) lie on the Cytoplasmic side of the membrane. Residues 1096-1116 (LRWFQMRIEMIFVIFFIAVTF) form a helical membrane-spanning segment. Residues 1117–1130 (ISILTTGEGEGTVG) are Extracellular-facing. The chain crosses the membrane as a helical span at residues 1131–1151 (IILTLAMNIMSTLQWAVNSSI). The Cytoplasmic segment spans residues 1152-1481 (DVDSLMRSVS…TEEEVQDTRL (330 aa)). Residues 1211-1444 (MTVKDLTAKY…RSLFRQAISP (234 aa)) enclose the ABC transporter 2 domain. ATP-binding positions include Tyr1220 and 1245-1252 (GRTGSGKS). Residues 1387-1481 (RTLKQAFADC…TEEEVQDTRL (95 aa)) form an interaction with GORASP2 region. Cys1396 carries S-palmitoyl cysteine lipidation. 2 positions are modified to phosphoserine: Ser1445 and Ser1457. The disordered stretch occupies residues 1462–1481 (QPQIAALKEETEEEVQDTRL). Positions 1471–1481 (ETEEEVQDTRL) are enriched in acidic residues. A PDZ-binding motif is present at residues 1479-1481 (TRL).

It belongs to the ABC transporter superfamily. ABCC family. CFTR transporter (TC 3.A.1.202) subfamily. Monomer; does not require oligomerization for channel activity. May form oligomers in the membrane. Interacts with SLC26A3, SLC26A6 and NHERF1. Interacts with SHANK2. Interacts with MYO6. Interacts (via C-terminus) with GOPC (via PDZ domain); this promotes CFTR internalization and thereby decreases channel activity. Interacts with SLC4A7 through NHERF1. Found in a complex with MYO5B and RAB11A. Interacts with ANO1. Interacts with SLC26A8. Interacts with AHCYL1; the interaction increases CFTR activity. Interacts with CSE1L. The core-glycosylated form interacts with GORASP2 (via PDZ GRASP-type 1 domain) in respone to ER stress. Interacts with MARCHF2; the interaction leads to CFTR ubiqtuitination and degradation. Interacts with ADGRG2. Post-translationally, N-glycosylated. In terms of processing, phosphorylated; cAMP treatment promotes phosphorylation and activates the channel. Dephosphorylation decreases the ATPase activity (in vitro). Phosphorylation at PKA sites activates the channel. Phosphorylation at PKC sites enhances the response to phosphorylation by PKA. Phosphorylated by AMPK; this inhibits channel activity. Ubiquitinated, leading to its degradation in the lysosome. Deubiquitination by USP10 in early endosomes enhances its endocytic recycling to the cell membrane. Ubiquitinated by RNF185 during ER stress. Ubiquitinated by MARCHF2.

It localises to the apical cell membrane. Its subcellular location is the early endosome membrane. It is found in the cell membrane. The protein localises to the recycling endosome membrane. The protein resides in the endoplasmic reticulum membrane. It localises to the nucleus. The enzyme catalyses ATP + H2O + closed Cl(-) channel = ADP + phosphate + open Cl(-) channel.. The catalysed reaction is chloride(in) = chloride(out). It catalyses the reaction hydrogencarbonate(in) = hydrogencarbonate(out). It carries out the reaction ATP + H2O = ADP + phosphate + H(+). Functionally, epithelial ion channel that plays an important role in the regulation of epithelial ion and water transport and fluid homeostasis. Mediates the transport of chloride ions across the cell membrane. Possesses an intrinsic ATPase activity and utilizes ATP to gate its channel; the passive flow of anions through the channel is gated by cycles of ATP binding and hydrolysis by the ATP-binding domains. The ion channel is also permeable to HCO(3)(-); selectivity depends on the extracellular chloride concentration. Exerts its function also by modulating the activity of other ion channels and transporters. Contributes to the regulation of the pH and the ion content of the epithelial fluid layer. Modulates the activity of the epithelial sodium channel (ENaC) complex, in part by regulating the cell surface expression of the ENaC complex. May regulate bicarbonate secretion and salvage in epithelial cells by regulating the transporter SLC4A7. Can inhibit the chloride channel activity of ANO1. Plays a role in the chloride and bicarbonate homeostasis during sperm epididymal maturation and capacitation. The chain is Cystic fibrosis transmembrane conductance regulator from Chlorocebus aethiops (Green monkey).